The primary structure comprises 72 residues: MMNRLLVFLMLGAAFMLVVSANDAYGDEPAFKDLNQGDESLGKRKSCCPCWLRGNCFWGQNCYPEGCSGPKV.

Positions 1–21 (MMNRLLVFLMLGAAFMLVVSA) are cleaved as a signal peptide. Residues 22–42 (NDAYGDEPAFKDLNQGDESLG) constitute a propeptide that is removed on maturation. 3 disulfides stabilise this stretch: C47-C62, C48-C56, and C50-C67.

Belongs to the sea anemone short toxin (type III) family.

It localises to the secreted. The protein resides in the nematocyst. In terms of biological role, voltage-gated sodium channel (Nav) inhibitor. 1 uM completely inhibits insect voltage-gated sodium channel inactivation (DmNav1 from D.melanogaster). This is Delta-actitoxin-Avd2b 1 from Anemonia viridis (Snakelocks anemone).